A 294-amino-acid chain; its full sequence is MINGSIVALITPMNSDGSVDFASLERLVEFHIDQGTDAIVAVGTTGESATLPMSEHVTVVSQTVKFAAGRVPVIGGNGANATSEAVELTKSLSKVGVAAMLGVTPYYNKPTPKGLIAHYKAVAASTDIPQILYNVPGRTAVDMLPETVAELVSVSNIIGVKEATGDLSRVKRLRELCGDDFLLYSGDDATAREFLLLGGNGVISVANNIVPQAFKAMCDAALAGNAELALSIDTPLRGLYSTLFCEANPIPVKWAAHRMGLIECGHIRLPLTELSEQCHGLLIEAMTRAQIEVK.

Threonine 45 is a binding site for pyruvate. Tyrosine 133 (proton donor/acceptor) is an active-site residue. Lysine 161 serves as the catalytic Schiff-base intermediate with substrate. Isoleucine 203 contacts pyruvate.

It belongs to the DapA family. Homotetramer; dimer of dimers.

The protein resides in the cytoplasm. It carries out the reaction L-aspartate 4-semialdehyde + pyruvate = (2S,4S)-4-hydroxy-2,3,4,5-tetrahydrodipicolinate + H2O + H(+). Its pathway is amino-acid biosynthesis; L-lysine biosynthesis via DAP pathway; (S)-tetrahydrodipicolinate from L-aspartate: step 3/4. Its function is as follows. Catalyzes the condensation of (S)-aspartate-beta-semialdehyde [(S)-ASA] and pyruvate to 4-hydroxy-tetrahydrodipicolinate (HTPA). In Shewanella baltica (strain OS223), this protein is 4-hydroxy-tetrahydrodipicolinate synthase.